A 234-amino-acid chain; its full sequence is UPF0173 metal-dependent hydrolase Msp_0516 (234 aa).

The protein belongs to the UPF0173 family.

In Methanosphaera stadtmanae (strain ATCC 43021 / DSM 3091 / JCM 11832 / MCB-3), this protein is UPF0173 metal-dependent hydrolase Msp_0516.